The primary structure comprises 302 residues: Fluoroacetate dehalogenase (302 aa).

One can recognise an AB hydrolase-1 domain in the interval 32–270 (PPLLLLHGFP…LDVWRKWASD (239 aa)). The active-site Nucleophile is the Asp-110. Residues Arg-111, Arg-114, His-155, Trp-156, and Tyr-219 each contribute to the fluoroacetate site. The active-site Proton acceptor is the His-280.

This sequence belongs to the AB hydrolase superfamily. Epoxide hydrolase family. In terms of assembly, homodimer.

It carries out the reaction a haloacetate + H2O = a halide anion + glycolate + H(+). The catalysed reaction is fluoroacetate + H2O = fluoride + glycolate + H(+). It catalyses the reaction chloroacetate + H2O = glycolate + chloride + H(+). Its function is as follows. Catalyzes the hydrolytic defluorination of fluoroacetate to produce glycolate. Has lower activity towards chloroacetate and bromoacetate. The chain is Fluoroacetate dehalogenase from Rhodopseudomonas palustris (strain ATCC BAA-98 / CGA009).